The sequence spans 238 residues: Ubiquitin-conjugating enzyme E2 R2 (238 aa).

The region spanning 8 to 174 (SSQKALMLEL…IRKQVSATKA (167 aa)) is the UBC core domain. C93 functions as the Glycyl thioester intermediate in the catalytic mechanism. The interval 98–113 (HPPVDDPQSGELPSER) is important for ubiquitin transfer. The tract at residues 194-238 (TKVPSNDNSSDLLYDDLYDDDIDDEDEEEEDADCYDDDDSGNEES) is disordered. Positions 206 to 238 (LYDDLYDDDIDDEDEEEEDADCYDDDDSGNEES) are enriched in acidic residues. S233 carries the phosphoserine; by CK2 modification.

Belongs to the ubiquitin-conjugating enzyme family. In terms of assembly, interacts with multiple Cul1-RING E3 ubiquitin-protein ligase complexes, also known as SCF (SKP1-CUL1-F-box protein) complexes, including SCF(FBXW7) and SCF(BTRC). Interacts with multiple Cul2-RING (CRL2) E3 ubiquitin-protein ligase complexes, also known as ECS (Elongin BC-CUL2/5-SOCS-box protein) complexes, including CRL2(FEM1C) and ECS(VHL). When phosphorylated, interacts with beta-TrCP (BTRC).

The catalysed reaction is S-ubiquitinyl-[E1 ubiquitin-activating enzyme]-L-cysteine + [E2 ubiquitin-conjugating enzyme]-L-cysteine = [E1 ubiquitin-activating enzyme]-L-cysteine + S-ubiquitinyl-[E2 ubiquitin-conjugating enzyme]-L-cysteine.. It participates in protein modification; protein ubiquitination. Neddylation of CUL2 in the CRL2(FEM1C) E3 ligase complex increases substrate affinity of UBE2R2 and the ubiquitin-transfer rate in the E2-E3 complex. Its function is as follows. E2 ubiquitin-conjugating enzyme that accepts ubiquitin from an E1 ubiquitin-activating protein, and catalyzes its covalent attachment to other proteins by an E3 ubiquitin-protein ligase complex. In vitro catalyzes monoubiquitination and 'Lys-48'-linked polyubiquitination. Works in collaboration with various Cul1-RING and Cul2-RING E3 ligase complexes. May be involved in degradation of katenin. This Homo sapiens (Human) protein is Ubiquitin-conjugating enzyme E2 R2 (UBE2R2).